An 881-amino-acid chain; its full sequence is Actin-like protein ARP8 (881 aa).

Positions 1-150 are disordered; it reads MSQEEAESSI…DPAKAPPGKK (150 aa). 2 stretches are compositionally biased toward acidic residues: residues 14-33 and 44-54; these read EPID…EEEN and ENAENESDDSV. Residues Ser-65 and Ser-70 each carry the phosphoserine modification. Over residues 77–114 the composition is skewed to acidic residues; it reads ADEEDEDEEGEDEDEDEDDNDVDNEDENDNDNANENEN. 502-505 is a binding site for ATP; sequence NIGA.

Belongs to the actin family. In terms of assembly, component of the chromatin-remodeling INO80 complex, at least composed of ARP4, ARP5, ARP8, RVB1, RVB2, TAF14, NHP10, IES1, IES3, IES4, IES6, ACT1, IES2, IES5 and INO80. Exists as monomers and dimers, but the dimer is most probably the biologically relevant form required for stable interactions with histones that exploits the twofold symmetry of the nucleosome core.

It localises to the nucleus. The protein resides in the cytoplasm. It is found in the cytoskeleton. Its function is as follows. Probably involved in transcription regulation via its interaction with the INO80 complex, a chromatin remodeling complex. Exhibits low basal ATPase activity, and unable to polymerize. Strongly prefer nucleosomes and H3-H4 tetramers over H2A-H2B dimers, suggesting it may act as a nucleosome recognition module within the complex. The chain is Actin-like protein ARP8 (ARP8) from Saccharomyces cerevisiae (strain ATCC 204508 / S288c) (Baker's yeast).